The primary structure comprises 1304 residues: MLDVNYFDELRIGLATADDIRQWSHGEVKKPETINYRTLRPEKDGLFCERIFGPTRDWECYCGKYKRVRFKGIICERCGVEVTRSKVRRERMGHIELAAPVTHIWYFKGVPSRLGYLLDLAPKDLEKVIYFAAYMITWVDEEARHRDLPSLEAQISVEKQEIEKRMNVELEERARKLEEDLAALEAEGAKADAKRKVREAAEREMRQIRERAQKEIDRIDEVFTRFKNLKVQDLEGDEVLYRELRDRFGQYFRGGMGAQAIKERLESFNLEAEAEALREQIRNGRGQKKARALKRLKVISAFLNTRNSPMGMVLDCIPVIPPDLRPMVQLDGGRFATSDLNDLYRRVINRNNRLKRLLDLGAPEIIVNNEKRMLQEAVDALFDNGRRGRPVTGPGNRPLKSLSDMLKGKQGRFRQNLLGKRVDYSGRSVIVVGPQLKLHQCGLPKVMALELFKPFVMKRLVDLNHAQNIKSAERMVERATSGLSRYAMVWDVLEEVIKEHPVLLNRAPTLHRLGIQAFEPQLVEGKAIQIHPLVCAAFNADFDGDQMAVHLPLSAEAQAEARILMLSSNNILKPADGRPVTMPSQDMVFGIYYLTTIKPGATGEGRVFSSDAEAIMARDLGELDIQAKIKVRLKDVVAVDDGTGSWTPPDGWQPGDPLLVETTLGRILFNEALPPDYRFINYELTKKDLSTIVNDLAERYPKVMVAACLDEMKTLGFHWATRAGVTISISDVVMPPRKQEILEAYEAKAEKVQRQYERGLITDDERRQELIEIWTQATADVAREMEANFPKDNPVFMMVNSGARGNMMQVRQIAGMRGLVANPKGEIIPRPIKSNFREGLSVLEYFISTHGARKGLADTALRTADSGYLTRRLVDVSQDVIVREEDCGTERAISMRIGVKGPDGTLTRLPTVETSVYARTLAEDVIVDGKVLAAKGSDIGDLTITELLAHGVEQVRVRSVLTCESKLGVCAACYGRSLASGKLVDVGEAVGIIAAQSIGEPGTQLTMRTFHTGGVAGEDITHGLPRVVELFEARTPKGVAPISEVTGRVKIEETEKARKIIITPDDGSEEVSYQVSKRARLRVAEGEHVEVGTQLVEGTVNPHEVLRILGPRAVQVHLVQEVQEVYRSQGVPIHDKHIEIIVRQMLKRVNILESGDTEFLPGELVERPKFEEENRRVVAEGGTPATARPVLMGITKASLATESWLSAASFQETTRVLTDAAINAKSDPLLGLKENVIIGKLIPAGTGMPRYRNIRVEPTEEARAAVYSMSGYDTGSYASGYGQFGTGSGQAVPLDDYDYGSYDR.

Zn(2+) is bound by residues Cys-60, Cys-62, Cys-75, and Cys-78. 3 residues coordinate Mg(2+): Asp-541, Asp-543, and Asp-545. Zn(2+) contacts are provided by Cys-887, Cys-963, Cys-970, and Cys-973.

The protein belongs to the RNA polymerase beta' chain family. In terms of assembly, the RNAP catalytic core consists of 2 alpha, 1 beta, 1 beta' and 1 omega subunit. When a sigma factor is associated with the core the holoenzyme is formed, which can initiate transcription. Mg(2+) serves as cofactor. Requires Zn(2+) as cofactor.

The enzyme catalyses RNA(n) + a ribonucleoside 5'-triphosphate = RNA(n+1) + diphosphate. In terms of biological role, DNA-dependent RNA polymerase catalyzes the transcription of DNA into RNA using the four ribonucleoside triphosphates as substrates. This is DNA-directed RNA polymerase subunit beta' from Acidothermus cellulolyticus (strain ATCC 43068 / DSM 8971 / 11B).